Consider the following 119-residue polypeptide: Dolichyl-diphosphooligosaccharide--protein glycosyltransferase subunit DAD1 (119 aa).

The residue at position 2 (Ser-2) is an N-acetylserine. The Cytoplasmic segment spans residues 2 to 30; that stretch reads SASVASVISRFLEEYLSSTPQRLKLLDAY. The helical transmembrane segment at 31 to 51 threads the bilayer; the sequence is LLYILLTGALQFGYCLLVGTF. The Lumenal portion of the chain corresponds to 52–54; sequence PFN. Residues 55 to 75 form a helical membrane-spanning segment; sequence SFLSGFISCVGSFILAGNGSL. The Cytoplasmic portion of the chain corresponds to 76 to 81; the sequence is RNRSNN. A helical membrane pass occupies residues 82–98; that stretch reads VFTLVRCFSSLVTLFYS. The Lumenal portion of the chain corresponds to 99–119; sequence RSPPREVPRGACIALFCERGN.

It belongs to the DAD/OST2 family. Component of the oligosaccharyltransferase (OST) complex. OST exists in two different complex forms which contain common core subunits RPN1, RPN2, OST48, OST4, DAD1 and TMEM258, either STT3A or STT3B as catalytic subunits, and form-specific accessory subunits. STT3A complex assembly occurs through the formation of 3 subcomplexes. Subcomplex 1 contains RPN1 and TMEM258, subcomplex 2 contains the STT3A-specific subunits STT3A, DC2/OSTC, and KCP2 as well as the core subunit OST4, and subcomplex 3 contains RPN2, DAD1, and OST48. The STT3A complex can form stable complexes with the Sec61 complex or with both the Sec61 and TRAP complexes.

It is found in the endoplasmic reticulum membrane. The protein operates within protein modification; protein glycosylation. Its function is as follows. Subunit of the oligosaccharyl transferase (OST) complex that catalyzes the initial transfer of a defined glycan (Glc(3)Man(9)GlcNAc(2) in eukaryotes) from the lipid carrier dolichol-pyrophosphate to an asparagine residue within an Asn-X-Ser/Thr consensus motif in nascent polypeptide chains, the first step in protein N-glycosylation. N-glycosylation occurs cotranslationally and the complex associates with the Sec61 complex at the channel-forming translocon complex that mediates protein translocation across the endoplasmic reticulum (ER). All subunits are required for a maximal enzyme activity. The chain is Dolichyl-diphosphooligosaccharide--protein glycosyltransferase subunit DAD1 from Canis lupus familiaris (Dog).